We begin with the raw amino-acid sequence, 503 residues long: Putative acyl--CoA ligase YdaB (503 aa).

Belongs to the ATP-dependent AMP-binding enzyme family.

This chain is Putative acyl--CoA ligase YdaB (ydaB), found in Bacillus subtilis (strain 168).